A 363-amino-acid chain; its full sequence is Histidinol-phosphate aminotransferase (363 aa).

Lysine 226 is subject to N6-(pyridoxal phosphate)lysine.

This sequence belongs to the class-II pyridoxal-phosphate-dependent aminotransferase family. Histidinol-phosphate aminotransferase subfamily. In terms of assembly, homodimer. The cofactor is pyridoxal 5'-phosphate.

It catalyses the reaction L-histidinol phosphate + 2-oxoglutarate = 3-(imidazol-4-yl)-2-oxopropyl phosphate + L-glutamate. The protein operates within amino-acid biosynthesis; L-histidine biosynthesis; L-histidine from 5-phospho-alpha-D-ribose 1-diphosphate: step 7/9. The protein is Histidinol-phosphate aminotransferase of Campylobacter lari (strain RM2100 / D67 / ATCC BAA-1060).